A 556-amino-acid chain; its full sequence is 2-succinyl-5-enolpyruvyl-6-hydroxy-3-cyclohexene-1-carboxylate synthase (556 aa).

It belongs to the TPP enzyme family. MenD subfamily. As to quaternary structure, homodimer. Requires Mg(2+) as cofactor. Mn(2+) is required as a cofactor. The cofactor is thiamine diphosphate.

It catalyses the reaction isochorismate + 2-oxoglutarate + H(+) = 5-enolpyruvoyl-6-hydroxy-2-succinyl-cyclohex-3-ene-1-carboxylate + CO2. Its pathway is quinol/quinone metabolism; 1,4-dihydroxy-2-naphthoate biosynthesis; 1,4-dihydroxy-2-naphthoate from chorismate: step 2/7. It participates in quinol/quinone metabolism; menaquinone biosynthesis. In terms of biological role, catalyzes the thiamine diphosphate-dependent decarboxylation of 2-oxoglutarate and the subsequent addition of the resulting succinic semialdehyde-thiamine pyrophosphate anion to isochorismate to yield 2-succinyl-5-enolpyruvyl-6-hydroxy-3-cyclohexene-1-carboxylate (SEPHCHC). The protein is 2-succinyl-5-enolpyruvyl-6-hydroxy-3-cyclohexene-1-carboxylate synthase of Mycobacterium leprae (strain Br4923).